We begin with the raw amino-acid sequence, 663 residues long: DNA ligase (663 aa).

NAD(+) contacts are provided by residues 31 to 35 (DYEYD), 80 to 81 (SL), and E109. The N6-AMP-lysine intermediate role is filled by K111. Residues R132, E167, K283, and K307 each contribute to the NAD(+) site. Residues C401, C404, C419, and C424 each contribute to the Zn(2+) site. Positions 586 to 663 (KIDNRFLGKT…TEEDLKDMIK (78 aa)) constitute a BRCT domain.

The protein belongs to the NAD-dependent DNA ligase family. LigA subfamily. The cofactor is Mg(2+). It depends on Mn(2+) as a cofactor.

It carries out the reaction NAD(+) + (deoxyribonucleotide)n-3'-hydroxyl + 5'-phospho-(deoxyribonucleotide)m = (deoxyribonucleotide)n+m + AMP + beta-nicotinamide D-nucleotide.. Functionally, DNA ligase that catalyzes the formation of phosphodiester linkages between 5'-phosphoryl and 3'-hydroxyl groups in double-stranded DNA using NAD as a coenzyme and as the energy source for the reaction. It is essential for DNA replication and repair of damaged DNA. This chain is DNA ligase, found in Clostridium kluyveri (strain NBRC 12016).